The following is a 633-amino-acid chain: Phosphomethylpyrimidine synthase (633 aa).

Residues asparagine 245, methionine 274, tyrosine 303, histidine 339, 359–361, 400–403, and glutamate 439 each bind substrate; these read SRG and DGLR. Histidine 443 serves as a coordination point for Zn(2+). Tyrosine 466 provides a ligand contact to substrate. Histidine 507 lines the Zn(2+) pocket. [4Fe-4S] cluster-binding residues include cysteine 587, cysteine 590, and cysteine 595.

Belongs to the ThiC family. In terms of assembly, homodimer. It depends on [4Fe-4S] cluster as a cofactor.

It catalyses the reaction 5-amino-1-(5-phospho-beta-D-ribosyl)imidazole + S-adenosyl-L-methionine = 4-amino-2-methyl-5-(phosphooxymethyl)pyrimidine + CO + 5'-deoxyadenosine + formate + L-methionine + 3 H(+). It participates in cofactor biosynthesis; thiamine diphosphate biosynthesis. Catalyzes the synthesis of the hydroxymethylpyrimidine phosphate (HMP-P) moiety of thiamine from aminoimidazole ribotide (AIR) in a radical S-adenosyl-L-methionine (SAM)-dependent reaction. The chain is Phosphomethylpyrimidine synthase from Neisseria meningitidis serogroup C / serotype 2a (strain ATCC 700532 / DSM 15464 / FAM18).